Consider the following 298-residue polypeptide: Phosphatidylglycerol--prolipoprotein diacylglyceryl transferase (298 aa).

7 helical membrane passes run 17–37, 59–79, 97–117, 129–149, 204–224, 230–250, and 257–277; these read LAVR…IVVG, MMFY…VLFY, GGMS…LFAW, FVAP…FING, SQLY…FLFA, MGAI…TVEF, and FLGL…PMIL. R142 contributes to the a 1,2-diacyl-sn-glycero-3-phospho-(1'-sn-glycerol) binding site.

The protein belongs to the Lgt family.

It localises to the cell inner membrane. It carries out the reaction L-cysteinyl-[prolipoprotein] + a 1,2-diacyl-sn-glycero-3-phospho-(1'-sn-glycerol) = an S-1,2-diacyl-sn-glyceryl-L-cysteinyl-[prolipoprotein] + sn-glycerol 1-phosphate + H(+). The protein operates within protein modification; lipoprotein biosynthesis (diacylglyceryl transfer). Functionally, catalyzes the transfer of the diacylglyceryl group from phosphatidylglycerol to the sulfhydryl group of the N-terminal cysteine of a prolipoprotein, the first step in the formation of mature lipoproteins. The chain is Phosphatidylglycerol--prolipoprotein diacylglyceryl transferase from Burkholderia orbicola (strain MC0-3).